Consider the following 300-residue polypeptide: ATP-dependent (S)-NAD(P)H-hydrate dehydratase (300 aa).

A YjeF C-terminal domain is found at Ile7–Val289. Residues Gly107 and Asn160–Arg166 contribute to the (6S)-NADPHX site. Residues Lys194 to Asp198 and Gly213 to Gly222 contribute to the ATP site. A (6S)-NADPHX-binding site is contributed by Asp223.

It belongs to the NnrD/CARKD family. Mg(2+) is required as a cofactor.

The enzyme catalyses (6S)-NADHX + ATP = ADP + phosphate + NADH + H(+). The catalysed reaction is (6S)-NADPHX + ATP = ADP + phosphate + NADPH + H(+). Catalyzes the dehydration of the S-form of NAD(P)HX at the expense of ATP, which is converted to ADP. Together with NAD(P)HX epimerase, which catalyzes the epimerization of the S- and R-forms, the enzyme allows the repair of both epimers of NAD(P)HX, a damaged form of NAD(P)H that is a result of enzymatic or heat-dependent hydration. The polypeptide is ATP-dependent (S)-NAD(P)H-hydrate dehydratase (Entamoeba histolytica (strain ATCC 30459 / HM-1:IMSS / ABRM)).